We begin with the raw amino-acid sequence, 391 residues long: Methylthioribose-1-phosphate isomerase (391 aa).

The Proton donor role is filled by D267.

It belongs to the eIF-2B alpha/beta/delta subunits family. MtnA subfamily.

It localises to the cytoplasm. The protein resides in the nucleus. The catalysed reaction is 5-(methylsulfanyl)-alpha-D-ribose 1-phosphate = 5-(methylsulfanyl)-D-ribulose 1-phosphate. It participates in amino-acid biosynthesis; L-methionine biosynthesis via salvage pathway; L-methionine from S-methyl-5-thio-alpha-D-ribose 1-phosphate: step 1/6. Catalyzes the interconversion of methylthioribose-1-phosphate (MTR-1-P) into methylthioribulose-1-phosphate (MTRu-1-P). This is Methylthioribose-1-phosphate isomerase from Ajellomyces capsulatus (strain NAm1 / WU24) (Darling's disease fungus).